The sequence spans 247 residues: UPF0246 protein LCABL_22600 (247 aa).

This sequence belongs to the UPF0246 family.

The sequence is that of UPF0246 protein LCABL_22600 from Lacticaseibacillus casei (strain BL23) (Lactobacillus casei).